A 125-amino-acid chain; its full sequence is Large ribosomal subunit protein bL12 (125 aa).

The protein belongs to the bacterial ribosomal protein bL12 family. In terms of assembly, homodimer. Part of the ribosomal stalk of the 50S ribosomal subunit. Forms a multimeric L10(L12)X complex, where L10 forms an elongated spine to which 2 to 4 L12 dimers bind in a sequential fashion. Binds GTP-bound translation factors.

In terms of biological role, forms part of the ribosomal stalk which helps the ribosome interact with GTP-bound translation factors. Is thus essential for accurate translation. The chain is Large ribosomal subunit protein bL12 from Caldanaerobacter subterraneus subsp. tengcongensis (strain DSM 15242 / JCM 11007 / NBRC 100824 / MB4) (Thermoanaerobacter tengcongensis).